Reading from the N-terminus, the 212-residue chain is MPQTDKQVCIPPELPELLKQFTKDAIRTQPPDLIQWAAEYFGAMSRGEIPPVRERSEQIPLSNWAELTPELLKVLHSRVAGRLIIHADELAQMWKVLNLPTDLFNSVMNVGRFTEEIEWLKFLALACSSLGVTIAKTLKIVCEVLSSDHDGGPPRIPFSTFQFLYTYIAEVDGEISSSHVSRMLNYIEQEVIGPDGLIKVNDFTQNPRVRLE.

An RIIa domain is found at 12–43; it reads PELPELLKQFTKDAIRTQPPDLIQWAAEYFGA. Phosphoserine is present on S56. Residues 209-212 are interaction with RHPN1; the sequence is VRLE.

This sequence belongs to the ropporin family. Homodimer. Interacts with AKAP3. May interact with SPA17. Interacts with RHPN1. Interacts with FSCB; the interaction increases upon spermatozoa capacitation conditions. Interacts with CFAP61. In terms of processing, sumoylated, sumoylation decreases upon spermatozoa capacitation conditions. As to expression, testis-specific. Present in the most inner parts of seminiferous tubules (at protein level).

Its subcellular location is the cell projection. It is found in the cilium. The protein localises to the flagellum. Its function is as follows. Important for male fertility. With ROPN1L, involved in fibrous sheath integrity and sperm motility, plays a role in PKA-dependent signaling processes required for spermatozoa capacitation. The polypeptide is Ropporin-1 (Ropn1) (Mus musculus (Mouse)).